We begin with the raw amino-acid sequence, 428 residues long: Glutamate-1-semialdehyde 2,1-aminomutase (428 aa).

Lys265 bears the N6-(pyridoxal phosphate)lysine mark.

This sequence belongs to the class-III pyridoxal-phosphate-dependent aminotransferase family. HemL subfamily. Homodimer. Requires pyridoxal 5'-phosphate as cofactor.

Its subcellular location is the cytoplasm. It catalyses the reaction (S)-4-amino-5-oxopentanoate = 5-aminolevulinate. It functions in the pathway porphyrin-containing compound metabolism; protoporphyrin-IX biosynthesis; 5-aminolevulinate from L-glutamyl-tRNA(Glu): step 2/2. The protein is Glutamate-1-semialdehyde 2,1-aminomutase of Aeromonas hydrophila subsp. hydrophila (strain ATCC 7966 / DSM 30187 / BCRC 13018 / CCUG 14551 / JCM 1027 / KCTC 2358 / NCIMB 9240 / NCTC 8049).